A 441-amino-acid polypeptide reads, in one-letter code: POC1 centriolar protein homolog A (441 aa).

7 WD repeats span residues 16–55 (GHRD…RAYR), 58–97 (GHKD…ESTV), 100–139 (AHTG…FLFS), 142–181 (QHIN…CIHS), 184–223 (EHGG…LIQH), 226–265 (VHSG…LLYT), and 268–307 (GHQG…ASYA). The tract at residues 323-380 (DYTSGVPAADRHRPERNAQTDQADDLEPRHIQMSAKDRSSPLSYTSRSIDQHHPQAED) is disordered. 3 stretches are compositionally biased toward basic and acidic residues: residues 331-340 (ADRHRPERNA), 348-361 (LEPR…KDRS), and 371-380 (IDQHHPQAED). Residues 400–427 (LTRTVGILEQRLSLTEDKLKECIDNQQA) adopt a coiled-coil conformation.

This sequence belongs to the WD repeat POC1 family. In terms of assembly, interacts with pat.

It localises to the cytoplasm. The protein resides in the cytoskeleton. In terms of biological role, may play an important role in centriole assembly and/or stability and ciliogenesis. This is POC1 centriolar protein homolog A (poc1a) from Xenopus tropicalis (Western clawed frog).